The sequence spans 916 residues: Major intrinsically disordered Notch2-binding receptor 1 (916 aa).

Topologically, residues 1 to 891 (METSQETSLF…AEFRRAKVCK (891 aa)) are cytoplasmic. 5 disordered regions span residues 390-409 (EEKLHYPNASSQTPNFPAPE), 553-591 (KSDCDSSPEHNLTKIANGVPNSKGDKGNRPENTHHSEEE), 648-675 (SLTSEGPSDDSASPRMFHAHSGSHGPKL), 705-726 (TRPSSRSLTEENSATESKIASI), and 745-782 (NEEEIKDTGPGDNKDWHRKSKEADRQYDIPPQHRLPKQ). Basic and acidic residues-rich tracts occupy residues 553 to 564 (KSDCDSSPEHNL) and 575 to 591 (KGDKGNRPENTHHSEEE). Position 711 is a phosphoserine (Ser711). A compositionally biased stretch (basic and acidic residues) spans 750–771 (KDTGPGDNKDWHRKSKEADRQY). A helical membrane pass occupies residues 892-912 (IAALIAAAACTVILVIVVPIC). Residues 913-916 (TMKS) are Extracellular-facing.

The protein belongs to the MINAR family. Interacts with NOTCH2; this interaction increases MINAR1 stability. Interacts (via N-terminus) with DEPTOR (via PDZ domain); this interaction may stabilize DEPTOR protein by impairing its ubiquitination. In terms of tissue distribution, widely expressed, including in breast epithelial cells and endothelial cells (at protein level). Expression is down-regulated in advanced breast tumors (at protein level).

Its subcellular location is the cell membrane. Functionally, intrinsically disordered protein which may negatively regulate mTOR signaling pathway by stabilizing the mTOR complex component DEPTOR. Negatively regulates angiogenesis. Negatively regulates cell growth. Negatively regulates neurite outgrowth in hippocampal neurons. This chain is Major intrinsically disordered Notch2-binding receptor 1, found in Homo sapiens (Human).